A 333-amino-acid chain; its full sequence is Protein RecA (333 aa).

Position 69 to 76 (69 to 76 (GPESSGKT)) interacts with ATP.

The protein belongs to the RecA family.

It localises to the cytoplasm. Can catalyze the hydrolysis of ATP in the presence of single-stranded DNA, the ATP-dependent uptake of single-stranded DNA by duplex DNA, and the ATP-dependent hybridization of homologous single-stranded DNAs. It interacts with LexA causing its activation and leading to its autocatalytic cleavage. This is Protein RecA from Mesoplasma florum (strain ATCC 33453 / NBRC 100688 / NCTC 11704 / L1) (Acholeplasma florum).